The sequence spans 322 residues: Eukaryotic translation initiation factor 3 subunit I (322 aa).

WD repeat units lie at residues 4–43 (GHERSITQIKYNREGDLLFSCSKDQKPNVWYSLNGERLGT), 46–85 (GHQGAVWCLDVDWETRKLITGAGDMTTKIWDVEYGTVIAS), 141–180 (MVESKITSMLWGPLDETIITGHDNGNIAIWDIRKGQKVVD), 184–223 (DHTAGINDMQLSKDGTMFVTASKDTTAKLFDSESLMCLKT), and 281–322 (GHFG…NIFE).

Belongs to the eIF-3 subunit I family. Component of the eukaryotic translation initiation factor 3 (eIF-3) complex. The eIF-3 complex interacts with pix.

It is found in the cytoplasm. Component of the eukaryotic translation initiation factor 3 (eIF-3) complex, which is involved in protein synthesis of a specialized repertoire of mRNAs and, together with other initiation factors, stimulates binding of mRNA and methionyl-tRNAi to the 40S ribosome. The eIF-3 complex specifically targets and initiates translation of a subset of mRNAs involved in cell proliferation. In Drosophila mojavensis (Fruit fly), this protein is Eukaryotic translation initiation factor 3 subunit I.